A 99-amino-acid polypeptide reads, in one-letter code: Aspartyl/glutamyl-tRNA(Asn/Gln) amidotransferase subunit C (99 aa).

It belongs to the GatC family. In terms of assembly, heterotrimer of A, B and C subunits.

The enzyme catalyses L-glutamyl-tRNA(Gln) + L-glutamine + ATP + H2O = L-glutaminyl-tRNA(Gln) + L-glutamate + ADP + phosphate + H(+). The catalysed reaction is L-aspartyl-tRNA(Asn) + L-glutamine + ATP + H2O = L-asparaginyl-tRNA(Asn) + L-glutamate + ADP + phosphate + 2 H(+). Its function is as follows. Allows the formation of correctly charged Asn-tRNA(Asn) or Gln-tRNA(Gln) through the transamidation of misacylated Asp-tRNA(Asn) or Glu-tRNA(Gln) in organisms which lack either or both of asparaginyl-tRNA or glutaminyl-tRNA synthetases. The reaction takes place in the presence of glutamine and ATP through an activated phospho-Asp-tRNA(Asn) or phospho-Glu-tRNA(Gln). This Paracidovorax citrulli (strain AAC00-1) (Acidovorax citrulli) protein is Aspartyl/glutamyl-tRNA(Asn/Gln) amidotransferase subunit C.